The following is a 408-amino-acid chain: Imidazolonepropionase (408 aa).

2 residues coordinate Fe(3+): His73 and His75. Zn(2+) contacts are provided by His73 and His75. Residues Arg82, Tyr145, and His178 each coordinate 4-imidazolone-5-propanoate. Tyr145 is an N-formimidoyl-L-glutamate binding site. His243 contributes to the Fe(3+) binding site. Position 243 (His243) interacts with Zn(2+). Gln246 is a 4-imidazolone-5-propanoate binding site. Residue Asp318 participates in Fe(3+) binding. Asp318 lines the Zn(2+) pocket. N-formimidoyl-L-glutamate contacts are provided by Asn320 and Gly322. Ser323 provides a ligand contact to 4-imidazolone-5-propanoate.

The protein belongs to the metallo-dependent hydrolases superfamily. HutI family. Requires Zn(2+) as cofactor. It depends on Fe(3+) as a cofactor.

The protein localises to the cytoplasm. The catalysed reaction is 4-imidazolone-5-propanoate + H2O = N-formimidoyl-L-glutamate. The protein operates within amino-acid degradation; L-histidine degradation into L-glutamate; N-formimidoyl-L-glutamate from L-histidine: step 3/3. Functionally, catalyzes the hydrolytic cleavage of the carbon-nitrogen bond in imidazolone-5-propanoate to yield N-formimidoyl-L-glutamate. It is the third step in the universal histidine degradation pathway. This chain is Imidazolonepropionase, found in Shewanella sp. (strain MR-4).